The following is a 115-amino-acid chain: Na(+)/H(+) antiporter subunit C1 (115 aa).

3 helical membrane passes run 1-21, 28-48, and 72-92; these read MEIL…YLIL, IIIG…TMGG, and LILT…VLAF.

The protein belongs to the CPA3 antiporters (TC 2.A.63) subunit C family. As to quaternary structure, may form a heterooligomeric complex that consists of seven subunits: mnhA1, mnhB1, mnhC1, mnhD1, mnhE1, mnhF1 and mnhG1.

The protein resides in the cell membrane. Mnh complex is a Na(+)/H(+) antiporter involved in Na(+) excretion. This Staphylococcus saprophyticus subsp. saprophyticus (strain ATCC 15305 / DSM 20229 / NCIMB 8711 / NCTC 7292 / S-41) protein is Na(+)/H(+) antiporter subunit C1 (mnhC1).